Here is a 182-residue protein sequence, read N- to C-terminus: Putative manganese efflux pump MntP (182 aa).

6 helical membrane-spanning segments follow: residues 6–26 (LIPL…VSLG), 37–57 (ILYI…IGMV), 71–91 (HFAG…SSIL), 101–121 (IGIS…SVGL), 131–151 (VITI…GLFI), and 162–182 (YGEI…LFPI).

Belongs to the MntP (TC 9.B.29) family.

It is found in the cell membrane. Functionally, probably functions as a manganese efflux pump. This chain is Putative manganese efflux pump MntP, found in Bacillus cereus (strain Q1).